The following is a 249-amino-acid chain: Phosphate import ATP-binding protein PstB 2 (249 aa).

Residues 4–244 (FDIENLDLYY…PSDDRTRGYV (241 aa)) enclose the ABC transporter domain. An ATP-binding site is contributed by 36–43 (GPSGCGKS).

This sequence belongs to the ABC transporter superfamily. Phosphate importer (TC 3.A.1.7) family. In terms of assembly, the complex is composed of two ATP-binding proteins (PstB), two transmembrane proteins (PstC and PstA) and a solute-binding protein (PstS).

The protein resides in the cell inner membrane. It carries out the reaction phosphate(out) + ATP + H2O = ADP + 2 phosphate(in) + H(+). Functionally, part of the ABC transporter complex PstSACB involved in phosphate import. Responsible for energy coupling to the transport system. The sequence is that of Phosphate import ATP-binding protein PstB 2 from Vibrio vulnificus (strain CMCP6).